The following is a 220-amino-acid chain: Octanoyltransferase (220 aa).

The 176-residue stretch at 34–209 folds into the BPL/LPL catalytic domain; that stretch reads ENSQDEIWVV…TLSQELGLAN (176 aa). Residues 73–80, 140–142, and 153–155 each bind substrate; these read RGGQVTYH, SLG, and GLA. Cys171 functions as the Acyl-thioester intermediate in the catalytic mechanism.

It belongs to the LipB family.

The protein localises to the cytoplasm. The catalysed reaction is octanoyl-[ACP] + L-lysyl-[protein] = N(6)-octanoyl-L-lysyl-[protein] + holo-[ACP] + H(+). Its pathway is protein modification; protein lipoylation via endogenous pathway; protein N(6)-(lipoyl)lysine from octanoyl-[acyl-carrier-protein]: step 1/2. Its function is as follows. Catalyzes the transfer of endogenously produced octanoic acid from octanoyl-acyl-carrier-protein onto the lipoyl domains of lipoate-dependent enzymes. Lipoyl-ACP can also act as a substrate although octanoyl-ACP is likely to be the physiological substrate. This chain is Octanoyltransferase, found in Shewanella piezotolerans (strain WP3 / JCM 13877).